The following is a 644-amino-acid chain: Beta-mannosyltransferase 2 (644 aa).

Residues 1 to 6 (MRTRLN) lie on the Cytoplasmic side of the membrane. Residues 7–27 (FLLLCIASVLSVIWIGVLLTW) form a helical membrane-spanning segment. Residues 28 to 644 (NDNNLGGISL…NDKKDLKIRQ (617 aa)) are Extracellular-facing. Asparagine 484 carries N-linked (GlcNAc...) asparagine glycosylation. Residues 512-644 (TRGEAERRRR…NDKKDLKIRQ (133 aa)) adopt a coiled-coil conformation. A disordered region spans residues 517 to 644 (ERRRRVAEER…NDKKDLKIRQ (128 aa)).

This sequence belongs to the BMT family.

The protein resides in the membrane. In terms of biological role, beta-mannosyltransferase involved in cell wall biosynthesis. Initiates the beta-mannosylation of core N-linked glycans. In Komagataella phaffii (strain GS115 / ATCC 20864) (Yeast), this protein is Beta-mannosyltransferase 2 (BMT2).